The primary structure comprises 527 residues: Bifunctional purine biosynthesis protein PurH (527 aa).

Positions 1 to 149 (MASDFLPVRR…KNFARVAVAT (149 aa)) constitute an MGS-like domain.

Belongs to the PurH family.

The catalysed reaction is (6R)-10-formyltetrahydrofolate + 5-amino-1-(5-phospho-beta-D-ribosyl)imidazole-4-carboxamide = 5-formamido-1-(5-phospho-D-ribosyl)imidazole-4-carboxamide + (6S)-5,6,7,8-tetrahydrofolate. The enzyme catalyses IMP + H2O = 5-formamido-1-(5-phospho-D-ribosyl)imidazole-4-carboxamide. The protein operates within purine metabolism; IMP biosynthesis via de novo pathway; 5-formamido-1-(5-phospho-D-ribosyl)imidazole-4-carboxamide from 5-amino-1-(5-phospho-D-ribosyl)imidazole-4-carboxamide (10-formyl THF route): step 1/1. It functions in the pathway purine metabolism; IMP biosynthesis via de novo pathway; IMP from 5-formamido-1-(5-phospho-D-ribosyl)imidazole-4-carboxamide: step 1/1. The polypeptide is Bifunctional purine biosynthesis protein PurH (Xanthomonas oryzae pv. oryzae (strain MAFF 311018)).